We begin with the raw amino-acid sequence, 385 residues long: UPF0284 protein P9301_04631 (385 aa).

The protein belongs to the UPF0284 family.

This Prochlorococcus marinus (strain MIT 9301) protein is UPF0284 protein P9301_04631.